Consider the following 173-residue polypeptide: Crossover junction endodeoxyribonuclease RuvC (173 aa).

Residues aspartate 8, glutamate 67, and aspartate 139 contribute to the active site. Mg(2+)-binding residues include aspartate 8, glutamate 67, and aspartate 139.

This sequence belongs to the RuvC family. Homodimer which binds Holliday junction (HJ) DNA. The HJ becomes 2-fold symmetrical on binding to RuvC with unstacked arms; it has a different conformation from HJ DNA in complex with RuvA. In the full resolvosome a probable DNA-RuvA(4)-RuvB(12)-RuvC(2) complex forms which resolves the HJ. Requires Mg(2+) as cofactor.

It is found in the cytoplasm. It catalyses the reaction Endonucleolytic cleavage at a junction such as a reciprocal single-stranded crossover between two homologous DNA duplexes (Holliday junction).. In terms of biological role, the RuvA-RuvB-RuvC complex processes Holliday junction (HJ) DNA during genetic recombination and DNA repair. Endonuclease that resolves HJ intermediates. Cleaves cruciform DNA by making single-stranded nicks across the HJ at symmetrical positions within the homologous arms, yielding a 5'-phosphate and a 3'-hydroxyl group; requires a central core of homology in the junction. The consensus cleavage sequence is 5'-(A/T)TT(C/G)-3'. Cleavage occurs on the 3'-side of the TT dinucleotide at the point of strand exchange. HJ branch migration catalyzed by RuvA-RuvB allows RuvC to scan DNA until it finds its consensus sequence, where it cleaves and resolves the cruciform DNA. This is Crossover junction endodeoxyribonuclease RuvC from Photorhabdus laumondii subsp. laumondii (strain DSM 15139 / CIP 105565 / TT01) (Photorhabdus luminescens subsp. laumondii).